The chain runs to 538 residues: Syncytin-2 (538 aa).

A signal peptide spans 1–15 (MGLLLLVLILTPSLA). Topologically, residues 16–478 (AYRHPDFPLL…GWLNWEGTWK (463 aa)) are extracellular. Positions 43-46 (CWLC) match the CXXC motif. Cystine bridges form between C43–C46, C43–C439, and C431–C438. N-linked (GlcNAc...) asparagine glycosylation is found at N133, N146, N177, N220, N241, N247, N312, and N332. The fusion peptide stretch occupies residues 354–374 (FIPLLAGLGILAGTGTGIAGI). Positions 414–430 (LQNRRGLDMLTAAQGGI) match the CKS-17 motif. Positions 431 to 439 (CLALDEKCC) match the CX6CC motif. N443 is a glycosylation site (N-linked (GlcNAc...) asparagine). A helical transmembrane segment spans residues 479-499 (WFSWVLPLTGPLVSLLLLLLF). Over 500–538 (GPCLLNLITQFVSSRLQAIKLQTNLSAGRHPRNIQESPF) the chain is Cytoplasmic.

It belongs to the gamma type-C retroviral envelope protein family. HERV class-I FRD env subfamily. The surface and transmembrane proteins form a heterodimer. They are attached by non-covalent interactions or by a labile interchain disulfide bond. In terms of processing, specific enzymatic cleavages in vivo yield the mature SU and TM proteins. Post-translationally, the CXXC motif is highly conserved across a broad range of retroviral envelope proteins. It is thought to participate in the formation of a labile disulfide bond possibly with the CX6CC motif present in the transmembrane protein.

It localises to the virion. The protein resides in the cell membrane. In terms of biological role, this endogenous retroviral envelope protein has retained its original fusogenic properties and participates in trophoblast fusion and the formation of a syncytium during placenta morphogenesis. The interaction with MFSD2A is apparently important for this process. Functionally, endogenous envelope proteins may have kept, lost or modified their original function during evolution but this one can still make pseudotypes with MLV, HIV-1 or SIV-1 virions and confer infectivity. Retroviral envelope proteins mediate receptor recognition and membrane fusion during early infection. The surface protein mediates receptor recognition, while the transmembrane protein anchors the envelope heterodimer to the viral membrane through one transmembrane domain. The other hydrophobic domain, called fusion peptide, mediates fusion of the viral membrane with the target cell membrane. The sequence is that of Syncytin-2 (ERVFRD-1) from Pan troglodytes (Chimpanzee).